Consider the following 111-residue polypeptide: Large ribosomal subunit protein uL22 (111 aa).

This sequence belongs to the universal ribosomal protein uL22 family. Part of the 50S ribosomal subunit.

Functionally, this protein binds specifically to 23S rRNA; its binding is stimulated by other ribosomal proteins, e.g. L4, L17, and L20. It is important during the early stages of 50S assembly. It makes multiple contacts with different domains of the 23S rRNA in the assembled 50S subunit and ribosome. In terms of biological role, the globular domain of the protein is located near the polypeptide exit tunnel on the outside of the subunit, while an extended beta-hairpin is found that lines the wall of the exit tunnel in the center of the 70S ribosome. The protein is Large ribosomal subunit protein uL22 of Clostridium perfringens (strain ATCC 13124 / DSM 756 / JCM 1290 / NCIMB 6125 / NCTC 8237 / Type A).